The chain runs to 335 residues: tRNA N6-adenosine threonylcarbamoyltransferase (335 aa).

A divalent metal cation-binding residues include His-109, His-113, and Tyr-130. Substrate contacts are provided by residues 130-134, Asp-162, Gly-177, Glu-181, and Asn-266; that span reads YVSGG. Asp-294 is an a divalent metal cation binding site.

The protein belongs to the KAE1 / TsaD family. Component of the EKC/KEOPS complex composed of at least GON7, TP53RK, TPRKB, OSGEP and LAGE3; the whole complex dimerizes. The cofactor is a divalent metal cation. Widely expressed at low level. Expressed at intermediate level in lung. Weakly expressed in testis, skeletal muscle, kidney, liver, spleen, brain and heart.

Its subcellular location is the cytoplasm. The protein resides in the nucleus. The catalysed reaction is L-threonylcarbamoyladenylate + adenosine(37) in tRNA = N(6)-L-threonylcarbamoyladenosine(37) in tRNA + AMP + H(+). Functionally, component of the EKC/KEOPS complex that is required for the formation of a threonylcarbamoyl group on adenosine at position 37 (t(6)A37) in tRNAs that read codons beginning with adenine. The complex is probably involved in the transfer of the threonylcarbamoyl moiety of threonylcarbamoyl-AMP (TC-AMP) to the N6 group of A37. OSGEP likely plays a direct catalytic role in this reaction, but requires other protein(s) of the complex to fulfill this activity. This chain is tRNA N6-adenosine threonylcarbamoyltransferase (Osgep), found in Mus musculus (Mouse).